The following is a 166-amino-acid chain: MIYIDNRQNSITVDENLQNTIREVIDYALKEEGMKISYEVSVIFVDNETIREINRENREVDKVTDVLSFPMLEYGEGKVFKDIYEECDFEDEYFDEGNLVLGDIALSLERAEEQSKEYGHSFLREAAYLTVHSVLHLMGYDHMVDEDKIKMRKREEEILSHFDINR.

Residues His-132, His-136, and His-142 each contribute to the Zn(2+) site.

This sequence belongs to the endoribonuclease YbeY family. It depends on Zn(2+) as a cofactor.

The protein localises to the cytoplasm. Its function is as follows. Single strand-specific metallo-endoribonuclease involved in late-stage 70S ribosome quality control and in maturation of the 3' terminus of the 16S rRNA. The chain is Endoribonuclease YbeY from Clostridium acetobutylicum (strain ATCC 824 / DSM 792 / JCM 1419 / IAM 19013 / LMG 5710 / NBRC 13948 / NRRL B-527 / VKM B-1787 / 2291 / W).